Here is a 396-residue protein sequence, read N- to C-terminus: Tyrosine--tRNA ligase (396 aa).

The 'HIGH' region signature appears at proline 43–histidine 52. The short motif at lysine 227 to serine 231 is the 'KMSKS' region element. Lysine 230 contributes to the ATP binding site. Residues threonine 338–isoleucine 396 enclose the S4 RNA-binding domain.

This sequence belongs to the class-I aminoacyl-tRNA synthetase family. TyrS type 2 subfamily. In terms of assembly, homodimer.

It localises to the cytoplasm. It carries out the reaction tRNA(Tyr) + L-tyrosine + ATP = L-tyrosyl-tRNA(Tyr) + AMP + diphosphate + H(+). Catalyzes the attachment of tyrosine to tRNA(Tyr) in a two-step reaction: tyrosine is first activated by ATP to form Tyr-AMP and then transferred to the acceptor end of tRNA(Tyr). This chain is Tyrosine--tRNA ligase, found in Dehalococcoides mccartyi (strain CBDB1).